A 301-amino-acid chain; its full sequence is Probable alpha-L-glutamate ligase (301 aa).

Positions 104–287 constitute an ATP-grasp domain; that stretch reads LQLLSRKGIG…VAGMIYEFIE (184 aa). ATP-binding positions include Lys141, 178-179, Asp187, and 211-213; these read EF and RSN. Mg(2+)-binding residues include Asp248, Glu260, and Asn262. Mn(2+) is bound by residues Asp248, Glu260, and Asn262.

This sequence belongs to the RimK family. Mg(2+) serves as cofactor. Requires Mn(2+) as cofactor.

This chain is Probable alpha-L-glutamate ligase, found in Vibrio vulnificus (strain CMCP6).